Consider the following 412-residue polypeptide: Tyrosine--tRNA ligase (412 aa).

The 'HIGH' region motif lies at Pro50 to His59. Residues Lys244–Ser248 carry the 'KMSKS' region motif. Lys247 provides a ligand contact to ATP. An S4 RNA-binding domain is found at Val348–Glu411.

It belongs to the class-I aminoacyl-tRNA synthetase family. TyrS type 2 subfamily. Homodimer.

The protein resides in the cytoplasm. The catalysed reaction is tRNA(Tyr) + L-tyrosine + ATP = L-tyrosyl-tRNA(Tyr) + AMP + diphosphate + H(+). Its function is as follows. Catalyzes the attachment of tyrosine to tRNA(Tyr) in a two-step reaction: tyrosine is first activated by ATP to form Tyr-AMP and then transferred to the acceptor end of tRNA(Tyr). The polypeptide is Tyrosine--tRNA ligase (Prochlorococcus marinus (strain MIT 9312)).